The chain runs to 90 residues: Cell division topological specificity factor (90 aa).

This sequence belongs to the MinE family.

Functionally, prevents the cell division inhibition by proteins MinC and MinD at internal division sites while permitting inhibition at polar sites. This ensures cell division at the proper site by restricting the formation of a division septum at the midpoint of the long axis of the cell. The sequence is that of Cell division topological specificity factor from Pelotomaculum thermopropionicum (strain DSM 13744 / JCM 10971 / SI).